Reading from the N-terminus, the 393-residue chain is Alpha-1,2 mannosyltransferase KTR1 (393 aa).

Topologically, residues 1 to 16 (MAKIMIPASKQPVYKK) are cytoplasmic. A helical; Signal-anchor for type II membrane protein transmembrane segment spans residues 17–34 (LGLLLVAVFTVYVFFHGA). Residues 35–68 (QYARGSAPSPKYSTVLSSGSGYKYSKVELPKYTG) are stem region. The Lumenal segment spans residues 35–393 (QYARGSAPSP…KPAGWQNHIG (359 aa)). Residues 69–393 (PREKATFVTL…KPAGWQNHIG (325 aa)) are catalytic. The N-linked (GlcNAc...) asparagine glycan is linked to asparagine 120. Glutamate 280 serves as the catalytic Nucleophile.

Belongs to the glycosyltransferase 15 family. Mn(2+) serves as cofactor. Post-translationally, N-glycosylated.

It localises to the golgi apparatus membrane. It participates in protein modification; protein glycosylation. Functionally, mannosyltransferase that transfers a mannose residue from GDP-mannose to a range of acceptors in vitro, forming an alpha-(1-&gt;2)-D-mannosyl-D-mannose linkage. This is Alpha-1,2 mannosyltransferase KTR1 (KTR1) from Saccharomyces cerevisiae (strain ATCC 204508 / S288c) (Baker's yeast).